The chain runs to 229 residues: Isopentenyl-diphosphate delta-isomerase (229 aa).

Lysine 39 contributes to the substrate binding site. 2 residues coordinate Mg(2+): histidine 43 and histidine 54. Positions 52–202 constitute a Nudix hydrolase domain; the sequence is LLHRAFSMFI…QYGFTPWFKL (151 aa). Substrate-binding residues include glutamine 72 and lysine 77. The active site involves cysteine 89. Serine 90 is a substrate binding site. Positions 152 and 154 each coordinate Mg(2+). Glutamate 154 is a catalytic residue.

It belongs to the IPP isomerase type 1 family. Mg(2+) serves as cofactor.

The protein resides in the cytoplasm. Its subcellular location is the nucleus. It carries out the reaction isopentenyl diphosphate = dimethylallyl diphosphate. It functions in the pathway isoprenoid biosynthesis; dimethylallyl diphosphate biosynthesis; dimethylallyl diphosphate from isopentenyl diphosphate: step 1/1. Its function is as follows. Isopentenyl-diphosphate delta-isomerase; part of the second module of ergosterol biosynthesis pathway that includes the middle steps of the pathway. Idi1 catalyzes the 1,3-allylic rearrangement of isopentenyl (IPP) to its highly electrophilic allylic isomer, dimethylallyl diphosphate (DMAPP). The second module is carried out in the vacuole and involves the formation of farnesyl diphosphate, which is also an important intermediate in the biosynthesis of ubiquinone, dolichol, heme and prenylated proteins. Activity by the mevalonate kinase erg12 first converts mevalonate into 5-phosphomevalonate. 5-phosphomevalonate is then further converted to 5-diphosphomevalonate by the phosphomevalonate kinase erg8. The diphosphomevalonate decarboxylase mvd1 then produces isopentenyl diphosphate. The isopentenyl-diphosphate delta-isomerase idi1 then catalyzes the 1,3-allylic rearrangement of the homoallylic substrate isopentenyl (IPP) to its highly electrophilic allylic isomer, dimethylallyl diphosphate (DMAPP). Finally the farnesyl diphosphate synthase fps1 catalyzes the sequential condensation of isopentenyl pyrophosphate with dimethylallyl pyrophosphate, and then with the resultant geranylpyrophosphate to the ultimate product farnesyl pyrophosphate. In Schizosaccharomyces pombe (strain 972 / ATCC 24843) (Fission yeast), this protein is Isopentenyl-diphosphate delta-isomerase.